A 387-amino-acid polypeptide reads, in one-letter code: Alkanesulfonate monooxygenase (387 aa).

This sequence belongs to the SsuD family.

It catalyses the reaction an alkanesulfonate + FMNH2 + O2 = an aldehyde + FMN + sulfite + H2O + 2 H(+). Catalyzes the desulfonation of aliphatic sulfonates. The sequence is that of Alkanesulfonate monooxygenase from Cupriavidus necator (strain ATCC 17699 / DSM 428 / KCTC 22496 / NCIMB 10442 / H16 / Stanier 337) (Ralstonia eutropha).